The primary structure comprises 98 residues: Aspartyl/glutamyl-tRNA(Asn/Gln) amidotransferase subunit C (98 aa).

The segment at 76–98 is disordered; it reads QVLSGAPDAEDGRFKVPAILEED.

It belongs to the GatC family. In terms of assembly, heterotrimer of A, B and C subunits.

It catalyses the reaction L-glutamyl-tRNA(Gln) + L-glutamine + ATP + H2O = L-glutaminyl-tRNA(Gln) + L-glutamate + ADP + phosphate + H(+). The enzyme catalyses L-aspartyl-tRNA(Asn) + L-glutamine + ATP + H2O = L-asparaginyl-tRNA(Asn) + L-glutamate + ADP + phosphate + 2 H(+). Allows the formation of correctly charged Asn-tRNA(Asn) or Gln-tRNA(Gln) through the transamidation of misacylated Asp-tRNA(Asn) or Glu-tRNA(Gln) in organisms which lack either or both of asparaginyl-tRNA or glutaminyl-tRNA synthetases. The reaction takes place in the presence of glutamine and ATP through an activated phospho-Asp-tRNA(Asn) or phospho-Glu-tRNA(Gln). This is Aspartyl/glutamyl-tRNA(Asn/Gln) amidotransferase subunit C from Renibacterium salmoninarum (strain ATCC 33209 / DSM 20767 / JCM 11484 / NBRC 15589 / NCIMB 2235).